A 215-amino-acid polypeptide reads, in one-letter code: Large ribosomal subunit protein uL3 (215 aa).

Positions S131–N144 are enriched in low complexity. The disordered stretch occupies residues S131–G150. Q153 bears the N5-methylglutamine mark.

The protein belongs to the universal ribosomal protein uL3 family. As to quaternary structure, part of the 50S ribosomal subunit. Forms a cluster with proteins L14 and L19. In terms of processing, methylated by PrmB.

In terms of biological role, one of the primary rRNA binding proteins, it binds directly near the 3'-end of the 23S rRNA, where it nucleates assembly of the 50S subunit. The protein is Large ribosomal subunit protein uL3 of Nitrosomonas europaea (strain ATCC 19718 / CIP 103999 / KCTC 2705 / NBRC 14298).